We begin with the raw amino-acid sequence, 290 residues long: HTH-type transcriptional activator RhaR (290 aa).

Residues 179-277 (DLIMSALQQS…GMTPRDYRQR (99 aa)) enclose the HTH araC/xylS-type domain. 2 DNA-binding regions (H-T-H motif) span residues 196–217 (ADFC…RQQT) and 244–267 (ISDI…TREA).

As to quaternary structure, binds DNA as a dimer.

The protein resides in the cytoplasm. In terms of biological role, activates expression of the rhaSR operon in response to L-rhamnose. This chain is HTH-type transcriptional activator RhaR, found in Yersinia pestis bv. Antiqua (strain Antiqua).